Consider the following 202-residue polypeptide: Lysozyme (202 aa).

Catalysis depends on residues D8 and E99.

Belongs to the glycosyl hydrolase 25 family.

It carries out the reaction Hydrolysis of (1-&gt;4)-beta-linkages between N-acetylmuramic acid and N-acetyl-D-glucosamine residues in a peptidoglycan and between N-acetyl-D-glucosamine residues in chitodextrins.. Its function is as follows. Helps to release the mature phage particles from the cell wall by breaking down the peptidoglycan. The polypeptide is Lysozyme (lysA) (Lactobacillus delbrueckii (Lactococcus delbrueckii bacteriophage mv1)).